Consider the following 264-residue polypeptide: 3-methyl-2-oxobutanoate hydroxymethyltransferase (264 aa).

Mg(2+) is bound by residues D45 and D84. 3-methyl-2-oxobutanoate contacts are provided by residues 45–46 (DS), D84, and K112. E114 provides a ligand contact to Mg(2+). Catalysis depends on E181, which acts as the Proton acceptor.

It belongs to the PanB family. As to quaternary structure, homodecamer; pentamer of dimers. Requires Mg(2+) as cofactor.

Its subcellular location is the cytoplasm. The catalysed reaction is 3-methyl-2-oxobutanoate + (6R)-5,10-methylene-5,6,7,8-tetrahydrofolate + H2O = 2-dehydropantoate + (6S)-5,6,7,8-tetrahydrofolate. Its pathway is cofactor biosynthesis; (R)-pantothenate biosynthesis; (R)-pantoate from 3-methyl-2-oxobutanoate: step 1/2. In terms of biological role, catalyzes the reversible reaction in which hydroxymethyl group from 5,10-methylenetetrahydrofolate is transferred onto alpha-ketoisovalerate to form ketopantoate. In Cronobacter sakazakii (strain ATCC BAA-894) (Enterobacter sakazakii), this protein is 3-methyl-2-oxobutanoate hydroxymethyltransferase.